Reading from the N-terminus, the 330-residue chain is Probable inactive heme oxygenase 2, chloroplastic (330 aa).

Composition is skewed to low complexity over residues 1–13 (MPLA…SAVV) and 56–69 (AAEA…VDEA). Disordered regions lie at residues 1 to 27 (MPLA…RARP), 50 to 82 (PSPP…YPRQ), and 107 to 156 (TTLK…LEGE). A chloroplast-targeting transit peptide spans 1–47 (MPLAAAVAASAVVPPRPPPPPPRRARPLRSFTGLILTRDLAALTVAR). Residues 114-151 (TGAEEEVGDGVSEDASASEEEEEEEDDDDVVEEEEEGA) are compositionally biased toward acidic residues.

Belongs to the heme oxygenase family.

The protein localises to the plastid. The protein resides in the chloroplast. In terms of biological role, probable inactive heme oxygenase that may play a role in the regulation of phytochrome assembly and photomorphogenesis. The polypeptide is Probable inactive heme oxygenase 2, chloroplastic (HO2) (Oryza sativa subsp. japonica (Rice)).